A 202-amino-acid polypeptide reads, in one-letter code: ATP synthase subunit b (202 aa).

Residues 9–29 (TTLSLCLAVCVVVIAVGTGWA) traverse the membrane as a helical segment.

Belongs to the ATPase B chain family. As to quaternary structure, F-type ATPases have 2 components, F(1) - the catalytic core - and F(0) - the membrane proton channel. F(1) has five subunits: alpha(3), beta(3), gamma(1), delta(1), epsilon(1). F(0) has three main subunits: a(1), b(2) and c(10-14). The alpha and beta chains form an alternating ring which encloses part of the gamma chain. F(1) is attached to F(0) by a central stalk formed by the gamma and epsilon chains, while a peripheral stalk is formed by the delta and b chains.

Its subcellular location is the cell inner membrane. Functionally, f(1)F(0) ATP synthase produces ATP from ADP in the presence of a proton or sodium gradient. F-type ATPases consist of two structural domains, F(1) containing the extramembraneous catalytic core and F(0) containing the membrane proton channel, linked together by a central stalk and a peripheral stalk. During catalysis, ATP synthesis in the catalytic domain of F(1) is coupled via a rotary mechanism of the central stalk subunits to proton translocation. Component of the F(0) channel, it forms part of the peripheral stalk, linking F(1) to F(0). The chain is ATP synthase subunit b from Pelobacter propionicus (strain DSM 2379 / NBRC 103807 / OttBd1).